Consider the following 501-residue polypeptide: Putative lon protease homolog (501 aa).

53 to 60 contributes to the ATP binding site; that stretch reads GPPGIGKS. A compositionally biased stretch (polar residues) spans 481-494; it reads SSSQRMSQHGYSSE. Residues 481-501 are disordered; sequence SSSQRMSQHGYSSENIDRSYM.

Belongs to the peptidase S16 family.

This chain is Putative lon protease homolog, found in Methanothermobacter thermautotrophicus (strain ATCC 29096 / DSM 1053 / JCM 10044 / NBRC 100330 / Delta H) (Methanobacterium thermoautotrophicum).